The primary structure comprises 31 residues: GSCLELGEYCNGSKDDCQCCRDNAYCGCDIF.

In terms of tissue distribution, expressed by the venom gland.

Its subcellular location is the secreted. In terms of biological role, not toxic to mice by intracerebroventricular injection. This is U14-ctenitoxin-Co1c from Ctenus ornatus (Brazilian spider).